The primary structure comprises 794 residues: EVI5-like protein (794 aa).

Positions 1 to 30 (MASPTLSPDSSSQEALSAPTCSPTSDSENL) are enriched in polar residues. 2 disordered regions span residues 1–36 (MASPTLSPDSSSQEALSAPTCSPTSDSENLSPDELE) and 49–75 (EADSKSMRSMNGSRRNSGSSLVSSSSA). Residues 55-75 (MRSMNGSRRNSGSSLVSSSSA) show a composition bias toward low complexity. Residues 115 to 300 (GIPHHFRAIV…RVFDIFMYEG (186 aa)) form the Rab-GAP TBC domain. 2 coiled-coil regions span residues 358 to 449 (KKMK…QQEN) and 569 to 709 (EAQA…LKGP). Serine 685 bears the Phosphoserine mark. The tract at residues 766–794 (LERPAKDSEGSSDSDADELAAPYSQGLDN) is disordered.

As to quaternary structure, may interact with RAB10.

Functionally, functions as a GTPase-activating protein (GAP) with a broad specificity. This chain is EVI5-like protein (EVI5L), found in Homo sapiens (Human).